Consider the following 295-residue polypeptide: Phosphoribosylaminoimidazole-succinocarboxamide synthase (295 aa).

This sequence belongs to the SAICAR synthetase family.

The catalysed reaction is 5-amino-1-(5-phospho-D-ribosyl)imidazole-4-carboxylate + L-aspartate + ATP = (2S)-2-[5-amino-1-(5-phospho-beta-D-ribosyl)imidazole-4-carboxamido]succinate + ADP + phosphate + 2 H(+). It participates in purine metabolism; IMP biosynthesis via de novo pathway; 5-amino-1-(5-phospho-D-ribosyl)imidazole-4-carboxamide from 5-amino-1-(5-phospho-D-ribosyl)imidazole-4-carboxylate: step 1/2. The polypeptide is Phosphoribosylaminoimidazole-succinocarboxamide synthase (Corynebacterium ammoniagenes (Brevibacterium ammoniagenes)).